The following is a 91-amino-acid chain: Small ribosomal subunit protein uS19 (91 aa).

This sequence belongs to the universal ribosomal protein uS19 family.

Functionally, protein S19 forms a complex with S13 that binds strongly to the 16S ribosomal RNA. The protein is Small ribosomal subunit protein uS19 of Methylacidiphilum infernorum (isolate V4) (Methylokorus infernorum (strain V4)).